The following is a 117-amino-acid chain: Aspartate 1-decarboxylase (117 aa).

Residue Ser-25 is the Schiff-base intermediate with substrate; via pyruvic acid of the active site. Ser-25 carries the post-translational modification Pyruvic acid (Ser). Position 57 (Thr-57) interacts with substrate. Tyr-58 acts as the Proton donor in catalysis. 72 to 74 (GAA) lines the substrate pocket.

Belongs to the PanD family. As to quaternary structure, heterooctamer of four alpha and four beta subunits. The cofactor is pyruvate. In terms of processing, is synthesized initially as an inactive proenzyme, which is activated by self-cleavage at a specific serine bond to produce a beta-subunit with a hydroxyl group at its C-terminus and an alpha-subunit with a pyruvoyl group at its N-terminus.

Its subcellular location is the cytoplasm. It carries out the reaction L-aspartate + H(+) = beta-alanine + CO2. The protein operates within cofactor biosynthesis; (R)-pantothenate biosynthesis; beta-alanine from L-aspartate: step 1/1. Catalyzes the pyruvoyl-dependent decarboxylation of aspartate to produce beta-alanine. The chain is Aspartate 1-decarboxylase from Helicobacter pylori (strain ATCC 700392 / 26695) (Campylobacter pylori).